Reading from the N-terminus, the 208-residue chain is Thymidylate kinase (208 aa).

10–17 (GLEGAGKT) is an ATP binding site.

It belongs to the thymidylate kinase family.

It carries out the reaction dTMP + ATP = dTDP + ADP. Its function is as follows. Phosphorylation of dTMP to form dTDP in both de novo and salvage pathways of dTTP synthesis. The chain is Thymidylate kinase from Actinobacillus pleuropneumoniae serotype 5b (strain L20).